The primary structure comprises 266 residues: Glucosamine-6-phosphate deaminase (266 aa).

Residue Asp72 is the Proton acceptor; for enolization step of the active site. Catalysis depends on Asp141, which acts as the For ring-opening step. His143 functions as the Proton acceptor; for ring-opening step in the catalytic mechanism. Glu148 functions as the For ring-opening step in the catalytic mechanism.

It belongs to the glucosamine/galactosamine-6-phosphate isomerase family. NagB subfamily. In terms of assembly, homohexamer.

It carries out the reaction alpha-D-glucosamine 6-phosphate + H2O = beta-D-fructose 6-phosphate + NH4(+). The protein operates within amino-sugar metabolism; N-acetylneuraminate degradation; D-fructose 6-phosphate from N-acetylneuraminate: step 5/5. Its activity is regulated as follows. Allosterically activated by N-acetylglucosamine 6-phosphate (GlcNAc6P). Its function is as follows. Catalyzes the reversible isomerization-deamination of glucosamine 6-phosphate (GlcN6P) to form fructose 6-phosphate (Fru6P) and ammonium ion. The protein is Glucosamine-6-phosphate deaminase of Serratia proteamaculans (strain 568).